The chain runs to 335 residues: Galactosylgalactosylxylosylprotein 3-beta-glucuronosyltransferase 1 (335 aa).

At 1–6 (MPKRRD) the chain is on the cytoplasmic side. An essential for transport from endoplasmic reticulum to Golgi apparatus and interaction with SAR1A region spans residues 3-5 (KRR). The chain crosses the membrane as a helical; Signal-anchor for type II membrane protein span at residues 7 to 27 (ILAIVLIVLPWTLLVTVWHQS). Topologically, residues 28 to 335 (TIAPLLTTHK…KGFTDPTVEI (308 aa)) are lumenal. UDP-alpha-D-glucuronate is bound at residue 92 to 94 (PTY). Residues threonine 104 and threonine 109 each carry the phosphothreonine modification. UDP-alpha-D-glucuronate is bound at residue aspartate 123. N-linked (GlcNAc...) asparagine glycosylation is present at asparagine 141. UDP-alpha-D-glucuronate is bound by residues arginine 166 and arginine 171. N-linked (GlcNAc...) asparagine glycosylation occurs at asparagine 185. 196–198 (DDD) lines the UDP-alpha-D-glucuronate pocket. Residue aspartate 198 coordinates Mn(2+). Positions 246-255 (FDPHRPFAID) are interaction with galactose moiety of substrate glycoprotein. Glutamate 285 serves as the catalytic Proton donor/acceptor. N-linked (GlcNAc...) asparagine glycosylation occurs at asparagine 304. Residue 312–314 (HTR) participates in UDP-alpha-D-glucuronate binding.

Belongs to the glycosyltransferase 43 family. As to quaternary structure, homodimer. Interacts with SAR1A. Mn(2+) serves as cofactor. The soluble form derives from the membrane form by proteolytic processing.

It localises to the golgi apparatus membrane. The protein localises to the secreted. The catalysed reaction is 3-O-(beta-D-galactosyl-(1-&gt;3)-beta-D-galactosyl-(1-&gt;4)-beta-D-xylosyl)-L-seryl-[protein] + UDP-alpha-D-glucuronate = 3-O-(beta-D-GlcA-(1-&gt;3)-beta-D-Gal-(1-&gt;3)-beta-D-Gal-(1-&gt;4)-beta-D-Xyl)-L-seryl-[protein] + UDP + H(+). Its pathway is protein modification; protein glycosylation. In terms of biological role, involved in the biosynthesis of L2/HNK-1 carbohydrate epitope on glycoproteins. Can also play a role in glycosaminoglycan biosynthesis. Substrates include asialo-orosomucoid (ASOR), asialo-fetuin, and asialo-neural cell adhesion molecule. Requires sphingomyelin for activity: stearoyl-sphingomyelin was the most effective, followed by palmitoyl-sphingomyelin and lignoceroyl-sphingomyelin. Activity was demonstrated only for sphingomyelin with a saturated fatty acid and not for that with an unsaturated fatty acid, regardless of the length of the acyl group. The sequence is that of Galactosylgalactosylxylosylprotein 3-beta-glucuronosyltransferase 1 from Canis lupus familiaris (Dog).